The following is a 626-amino-acid chain: Putative folylpolyglutamate synthase (626 aa).

144–147 (GKGS) provides a ligand contact to ATP. Residues Ser168, Glu235, and His263 each coordinate Mg(2+). ATP-binding residues include Arg412 and Asp430.

This sequence belongs to the folylpolyglutamate synthase family.

The enzyme catalyses (6S)-5,6,7,8-tetrahydrofolyl-(gamma-L-Glu)(n) + L-glutamate + ATP = (6S)-5,6,7,8-tetrahydrofolyl-(gamma-L-Glu)(n+1) + ADP + phosphate + H(+). The protein operates within cofactor biosynthesis; tetrahydrofolylpolyglutamate biosynthesis. Functionally, conversion of folates to polyglutamate derivatives. In Dictyostelium discoideum (Social amoeba), this protein is Putative folylpolyglutamate synthase (folC).